We begin with the raw amino-acid sequence, 318 residues long: Porphobilinogen deaminase (318 aa).

Cys-245 is modified (S-(dipyrrolylmethanemethyl)cysteine).

This sequence belongs to the HMBS family. Monomer. The cofactor is dipyrromethane.

The catalysed reaction is 4 porphobilinogen + H2O = hydroxymethylbilane + 4 NH4(+). It participates in porphyrin-containing compound metabolism; protoporphyrin-IX biosynthesis; coproporphyrinogen-III from 5-aminolevulinate: step 2/4. The protein operates within porphyrin-containing compound metabolism; chlorophyll biosynthesis. Functionally, tetrapolymerization of the monopyrrole PBG into the hydroxymethylbilane pre-uroporphyrinogen in several discrete steps. This chain is Porphobilinogen deaminase, found in Prochlorococcus marinus (strain MIT 9215).